The primary structure comprises 107 residues: Replication initiation control protein YabA (107 aa).

Residues His-80, Cys-82, Cys-97, and Cys-100 each contribute to the Zn(2+) site.

This sequence belongs to the YabA family. In terms of assembly, homotetramer. Interacts with both DnaA and DnaN, acting as a bridge between these two proteins. Zn(2+) serves as cofactor.

Its subcellular location is the cytoplasm. The protein resides in the nucleoid. In terms of biological role, involved in control of chromosome replication initiation. Inhibits the cooperative binding of DnaA to the oriC region, thus negatively regulating initiation of chromosome replication. Inhibits the ability of DnaA-ATP to form a helix on DNA; does not disassemble preformed DnaA-DNA helices. Decreases the residence time of DnaA on the chromosome at its binding sites (oriC, replication forks and promoter-binding sites). Tethers DnaA to the replication machinery via the DNA polymerase beta sliding clamp subunit (dnaN). Associates with oriC and other DnaA targets on the chromosome in a DnaA-dependent manner. The sequence is that of Replication initiation control protein YabA from Streptococcus gordonii (strain Challis / ATCC 35105 / BCRC 15272 / CH1 / DL1 / V288).